Here is a 316-residue protein sequence, read N- to C-terminus: GTPase Era (316 aa).

Positions 9–190 (RAGFAAIIGA…TAKLVSMMPE (182 aa)) constitute an Era-type G domain. The tract at residues 17–24 (GAPNAGKS) is G1. A GTP-binding site is contributed by 17 to 24 (GAPNAGKS). The interval 43-47 (QTTRF) is G2. The tract at residues 64-67 (DTPG) is G3. Residues 64–68 (DTPGI) and 140–143 (NKID) contribute to the GTP site. Residues 140–143 (NKID) are G4. Positions 169 to 171 (ISA) are G5. Residues 221–298 (VHEELPYAAT…HLFLHVKVKE (78 aa)) form the KH type-2 domain.

The protein belongs to the TRAFAC class TrmE-Era-EngA-EngB-Septin-like GTPase superfamily. Era GTPase family. In terms of assembly, monomer.

It localises to the cytoplasm. The protein resides in the cell inner membrane. Functionally, an essential GTPase that binds both GDP and GTP, with rapid nucleotide exchange. Plays a role in 16S rRNA processing and 30S ribosomal subunit biogenesis and possibly also in cell cycle regulation and energy metabolism. The protein is GTPase Era of Caulobacter vibrioides (strain ATCC 19089 / CIP 103742 / CB 15) (Caulobacter crescentus).